We begin with the raw amino-acid sequence, 74 residues long: Invertase 3 (74 aa).

Residues methionine 1 to alanine 19 form the signal peptide. Asparagine 23 carries an N-linked (GlcNAc...) asparagine glycan. Residues tryptophan 39–aspartate 42 and glutamine 60 each bind substrate. The active site involves aspartate 42. N-linked (GlcNAc...) asparagine glycosylation occurs at asparagine 64.

The protein belongs to the glycosyl hydrolase 32 family.

It catalyses the reaction Hydrolysis of terminal non-reducing beta-D-fructofuranoside residues in beta-D-fructofuranosides.. The protein is Invertase 3 (SUC3) of Saccharomyces cerevisiae (Baker's yeast).